We begin with the raw amino-acid sequence, 390 residues long: Galactokinase (390 aa).

Substrate is bound at residue 34–37 (EHTD). ATP-binding positions include Ser-68 and 122-128 (GSGLSSS). 2 residues coordinate Mg(2+): Ser-128 and Glu-160. Catalysis depends on Asp-172, which acts as the Proton acceptor. Residue Tyr-221 participates in substrate binding.

The protein belongs to the GHMP kinase family. GalK subfamily.

The protein localises to the cytoplasm. It catalyses the reaction alpha-D-galactose + ATP = alpha-D-galactose 1-phosphate + ADP + H(+). It participates in carbohydrate metabolism; galactose metabolism. Its function is as follows. Catalyzes the transfer of the gamma-phosphate of ATP to D-galactose to form alpha-D-galactose-1-phosphate (Gal-1-P). This Chloroflexus aurantiacus (strain ATCC 29366 / DSM 635 / J-10-fl) protein is Galactokinase.